Reading from the N-terminus, the 166-residue chain is Cold-inducible RNA-binding protein (166 aa).

An RRM domain is found at 6-84 (GKLFVGGLNF…RQIRVDQAGK (79 aa)). Positions 68–166 (NGKSVDGRQI…DSYDSYTTQE (99 aa)) are disordered. The segment covering 93 to 120 (YRGGSSGGRGFFRGGRGRGGGGDRGYGG) has biased composition (gly residues). Low complexity predominate over residues 121-166 (SSRFENRSGGYQSSGSRDYYGRSHGSYGDRSGGSYRDSYDSYTTQE).

Interacts with prmt1. Interacts with elavl1/elrA (via RRM3). Associates with ribosomes. Methylated on arginine residues within RGG motifs. Methylation by prmt1 promotes cytoplasmic accumulation.

Its subcellular location is the nucleus. It localises to the nucleoplasm. The protein resides in the cytoplasm. Cold-inducible mRNA binding protein. Acts cooperatively with elavl1/elrA to stabilize AU-rich element (ARE)-containing mRNAs by binding to themm and inhibiting their deadenylation. Essential for embryonic gastrulation and neural development, acting to maintain the expression of a set of adhesion molecules, and cell movement during embryogenesis. Required for pronephros development. This is Cold-inducible RNA-binding protein from Xenopus tropicalis (Western clawed frog).